The following is a 1126-amino-acid chain: Stress response protein nst1 (1126 aa).

The segment covering 1–17 has biased composition (low complexity); that stretch reads MSTAAPAASATNSAIPA. 7 disordered regions span residues 1 to 192, 266 to 348, 404 to 453, 492 to 774, 823 to 914, 939 to 965, and 1075 to 1126; these read MSTA…STQE, NQGS…ARAA, AAHQ…EQRM, LLEE…NGLP, NGAR…AQRD, LSQS…GPSL, and FEPD…PMGF. Basic residues predominate over residues 35 to 45; that stretch reads NRKKQKRRQKQ. A compositionally biased stretch (basic and acidic residues) spans 96–111; the sequence is ANHKDDQDSVDAHDDY. Basic residues predominate over residues 125-136; it reads TGRKSKKKKGKK. Positions 291–300 are enriched in polar residues; it reads GQHTRTQGQF. Composition is skewed to acidic residues over residues 311–344 and 419–448; these read PEEE…EDDE and DEED…DTMT. The stretch at 479 to 655 forms a coiled coil; it reads KVAEQRQQKL…KREYQAKRTS (177 aa). Basic and acidic residues-rich tracts occupy residues 492–512 and 522–651; these read LLEE…EAQK and QAKE…EYQA. Composition is skewed to polar residues over residues 655–670 and 694–721; these read SPFS…SSPV and QPSQ…SVSP. Over residues 727-737 the composition is skewed to low complexity; the sequence is SQSSGASSVAS. Polar residues-rich tracts occupy residues 846 to 860 and 867 to 885; these read GQQQ…QQSG and RQPS…TQPM. A compositionally biased stretch (low complexity) spans 886-898; sequence PISRPSPIKRPSS. The span at 902-914 shows a compositional bias: basic and acidic residues; that stretch reads DQRKNGDRTAQRD. A compositionally biased stretch (polar residues) spans 1115-1126; it reads VLRQFSSPPMGF.

Belongs to the NST1 family.

It is found in the cytoplasm. In terms of biological role, may act as a negative regulator of salt tolerance. In Aspergillus clavatus (strain ATCC 1007 / CBS 513.65 / DSM 816 / NCTC 3887 / NRRL 1 / QM 1276 / 107), this protein is Stress response protein nst1 (nst1).